Consider the following 584-residue polypeptide: Aspartate--tRNA(Asp/Asn) ligase (584 aa).

Glu177 provides a ligand contact to L-aspartate. An aspartate region spans residues 201-204; sequence QLFK. Position 223 (Arg223) interacts with L-aspartate. ATP-binding positions include 223 to 225 and Gln232; that span reads RDE. His447 contacts L-aspartate. Glu481 provides a ligand contact to ATP. L-aspartate is bound at residue Arg488. 533 to 536 is a binding site for ATP; that stretch reads GLDR.

Belongs to the class-II aminoacyl-tRNA synthetase family. Type 1 subfamily. In terms of assembly, homodimer.

It is found in the cytoplasm. The catalysed reaction is tRNA(Asx) + L-aspartate + ATP = L-aspartyl-tRNA(Asx) + AMP + diphosphate. Aspartyl-tRNA synthetase with relaxed tRNA specificity since it is able to aspartylate not only its cognate tRNA(Asp) but also tRNA(Asn). Reaction proceeds in two steps: L-aspartate is first activated by ATP to form Asp-AMP and then transferred to the acceptor end of tRNA(Asp/Asn). This is Aspartate--tRNA(Asp/Asn) ligase from Chlamydia pneumoniae (Chlamydophila pneumoniae).